A 411-amino-acid chain; its full sequence is Anthranilate synthase component 1 (411 aa).

Residues serine 27 and 203–205 each bind L-tryptophan; that span reads PYM. Chorismate is bound at residue 237–238; sequence GT. Residue glutamate 262 participates in Mg(2+) binding. Chorismate contacts are provided by residues tyrosine 350, arginine 369, 382-384, and glycine 384; that span reads GAG. Mg(2+) is bound at residue glutamate 397.

The protein belongs to the anthranilate synthase component I family. In terms of assembly, heterotetramer consisting of two non-identical subunits: a beta subunit (TrpG) and a large alpha subunit (TrpE). The cofactor is Mg(2+).

It carries out the reaction chorismate + L-glutamine = anthranilate + pyruvate + L-glutamate + H(+). Its pathway is amino-acid biosynthesis; L-tryptophan biosynthesis; L-tryptophan from chorismate: step 1/5. With respect to regulation, feedback inhibited by tryptophan. Functionally, part of a heterotetrameric complex that catalyzes the two-step biosynthesis of anthranilate, an intermediate in the biosynthesis of L-tryptophan. In the first step, the glutamine-binding beta subunit (TrpG) of anthranilate synthase (AS) provides the glutamine amidotransferase activity which generates ammonia as a substrate that, along with chorismate, is used in the second step, catalyzed by the large alpha subunit of AS (TrpE) to produce anthranilate. In the absence of TrpG, TrpE can synthesize anthranilate directly from chorismate and high concentrations of ammonia. The sequence is that of Anthranilate synthase component 1 (trpE) from Archaeoglobus fulgidus (strain ATCC 49558 / DSM 4304 / JCM 9628 / NBRC 100126 / VC-16).